A 268-amino-acid chain; its full sequence is 4-pyridoxolactonase (268 aa).

H96, H98, D100, H101, H185, D207, and H252 together coordinate Zn(2+). D100 (proton donor/acceptor) is an active-site residue.

Belongs to the metallo-beta-lactamase superfamily. As to quaternary structure, homodimer. The cofactor is Zn(2+).

It carries out the reaction 4-pyridoxolactone + H2O = 4-pyridoxate + H(+). The protein operates within cofactor degradation; B6 vitamer degradation; 4-pyridoxate from pyridoxal: step 2/2. Its activity is regulated as follows. Inhibited by Hg(2+). In terms of biological role, involved in the degradation of pyridoxine or pyridoxamine (free, phosphate-unbound, forms of vitamin B6). Hydrolyzes 4-pyridoxolactone to 4-pyridoxic acid. Has lower activity toward N-hexanoyl-D,L-homoserine lactone, but is not active toward 5-pyridoxolactone and gamma-butyrolactone. The chain is 4-pyridoxolactonase from Mesorhizobium japonicum (strain LMG 29417 / CECT 9101 / MAFF 303099) (Mesorhizobium loti (strain MAFF 303099)).